A 1067-amino-acid chain; its full sequence is MKGMRLMPMKMKAKLVVLSVGALWMMMFFLVDYAEGRRLSQLPESECDFDFKEQPEDFFGILDSSLVPPKEPKDDIYQLKTTRQHSGRRRKQSHKSQNKAALRLPPPFLWTDDAVDVLQHSHSPTLNGQPIQRRRRAVTVRKERTWDYGVIPYEIDTIFSGAHKALFKQAMRHWENFTCIKFVERDPNLHANYIYFTVKNCGCCSFLGKNGNGRQPISIGRNCEKFGIIIHELGHTIGFHHEHARGDRDKHIVINKGNIMRGQEYNFDVLSPEEVDLPLLPYDLNSIMHYAKNSFSKSPYLDTITPIGIPPGTHLELGQRKRLSRGDIVQANLLYKCASCGRTYQQNSGHIVSPHFIYSGNGVLSEFEGSGDAGEDPSAESEFDASLTNCEWRITATNGEKVILHLQQLHLMSSDDCTQDYLEIRDGYWHKSPLVRRICGNVSGEVITTQTSRMLLNYVNRNAAKGYRGFKARFEVVCGGDLKLTKDQSIDSPNYPMDYMPDKECVWRITAPDNHQVALKFQSFELEKHDGCAYDFVEIRDGNHSDSRLIGRFCGDKLPPNIKTRSNQMYIRFVSDSSVQKLGFSAALMLDVDECKFTDHGCQHLCINTLGSYQCGCRAGYELQANGKTCEDACGGVVDATKSNGSLYSPSYPDVYPNSKQCVWEVVAPPNHAVFLNFSHFDLEGTRFHYTKCNYDYLIIYSKMRDNRLKKIGIYCGHELPPVVNSEQSILRLEFYSDRTVQRSGFVAKFVIDVDECSMNNGGCQHRCRNTFGSYQCSCRNGYTLAENGHNCTETRCKFEITTSYGVLQSPNYPEDYPRNIYCYWHFQTVLGHRIQLTFHDFEVESHQECIYDYVAIYDGRSENSSTLGIYCGGREPYAVIASTNEMFMVLATDAGLQRKGFKATFVSECGGYLRATNHSQTFYSHPRYGSRPYKRNMYCDWRIQADPESSVKIRFLHFEIEYSERCDYDYLEITEEGYSMNTIHGRFCGKHKPPIIISNSDTLLLRFQTDESNSLRGFAISFMAVDPPEDSVGEDFDAVTPFPGYLKSMYSSETGSDHLLPPSRLI.

An N-terminal signal peptide occupies residues 1-36 (MKGMRLMPMKMKAKLVVLSVGALWMMMFFLVDYAEG). Residues 37–136 (RRLSQLPESE…NGQPIQRRRR (100 aa)) constitute a propeptide that is removed on maturation. Residues 136 to 338 (RAVTVRKERT…VQANLLYKCA (203 aa)) enclose the Peptidase M12A domain. Asparagine 176 carries N-linked (GlcNAc...) asparagine glycosylation. Disulfide bonds link cysteine 179–cysteine 337, cysteine 201–cysteine 223, cysteine 203–cysteine 204, cysteine 340–cysteine 390, and cysteine 417–cysteine 439. Zn(2+) is bound at residue histidine 231. Glutamate 232 is a catalytic residue. 2 residues coordinate Zn(2+): histidine 235 and histidine 241. 2 consecutive short sequence motifs (cell attachment site) follow at residues 245-247 (RGD) and 325-327 (RGD). CUB domains lie at 340–477 (CGRT…FEVV) and 478–591 (CGGD…LMLD). Asparagine 441 carries N-linked (GlcNAc...) asparagine glycosylation. Cystine bridges form between cysteine 478-cysteine 505, cysteine 532-cysteine 554, cysteine 595-cysteine 606, cysteine 602-cysteine 615, cysteine 617-cysteine 630, and cysteine 634-cysteine 662. N-linked (GlcNAc...) asparagine glycosylation is present at asparagine 543. Residues 591-631 (DVDECKFTDHGCQHLCINTLGSYQCGCRAGYELQANGKTCE) form the EGF-like 1; calcium-binding domain. Residues 634–753 (CGGVVDATKS…SGFVAKFVID (120 aa)) enclose the CUB 3 domain. N-linked (GlcNAc...) asparagine glycans are attached at residues asparagine 644 and asparagine 677. 8 disulfides stabilise this stretch: cysteine 693–cysteine 716, cysteine 757–cysteine 768, cysteine 764–cysteine 777, cysteine 779–cysteine 792, cysteine 797–cysteine 823, cysteine 850–cysteine 872, cysteine 910–cysteine 940, and cysteine 967–cysteine 989. One can recognise an EGF-like 2; calcium-binding domain in the interval 753–793 (DVDECSMNNGGCQHRCRNTFGSYQCSCRNGYTLAENGHNCT). N-linked (GlcNAc...) asparagine glycosylation is present at asparagine 791. CUB domains are found at residues 797-909 (CKFE…FVSE) and 910-1026 (CGGY…FMAV). 2 N-linked (GlcNAc...) asparagine glycosylation sites follow: asparagine 864 and asparagine 918.

It depends on Zn(2+) as a cofactor.

In terms of biological role, metalloprotease which cleaves TGF-beta family ligands daw, Actbeta and myo in vitro. Cleavage of daw enhances its signaling activity. Cleaves dorsal-ventral patterning protein sog. Processes sog more efficiently than metalloprotease tld which also cleaves sog. Required for normal dorsal development. TLD may interact physically with DPP-C protein. The chain is Dorsal-ventral patterning protein tolloid (tld) from Drosophila melanogaster (Fruit fly).